The primary structure comprises 342 residues: MSAFTPASEVLLRHSDDFEQSRILFAGDLQDDLPARFECAASRAHTQQFHHWQALSRQMCDNVRFSLVAQASDVADCDTLIYYWPKNKPEAQFQLMNILSLMPSGVDVFVVGENRSGVRSAEPMLADYAPLNKVDSARRCGLYHGRLEKQPQFSLESWWAEYSIDGLTIKTLPGVFSRDGLDVGSQLLLSTLTPHTKGKVLDVGCGAGVLSAALASHSPKVRLTLCDVSAPAVEASRATLAANGLEGEVFASNVFSEVKGRFDMIISNPPFHDGMQTSLDAAQTLIRGAVRHLNSGGELRIVANAFLPYPKILDETFGFHEVIAQTGRFKVYRTVMTRQAKK.

The protein belongs to the methyltransferase superfamily. RsmC family. As to quaternary structure, monomer.

The protein localises to the cytoplasm. It catalyses the reaction guanosine(1207) in 16S rRNA + S-adenosyl-L-methionine = N(2)-methylguanosine(1207) in 16S rRNA + S-adenosyl-L-homocysteine + H(+). Its function is as follows. Specifically methylates the guanine in position 1207 of 16S rRNA in the 30S particle. In Salmonella paratyphi B (strain ATCC BAA-1250 / SPB7), this protein is Ribosomal RNA small subunit methyltransferase C.